Consider the following 94-residue polypeptide: Small ribosomal subunit protein bS20 (94 aa).

Belongs to the bacterial ribosomal protein bS20 family.

Binds directly to 16S ribosomal RNA. The polypeptide is Small ribosomal subunit protein bS20 (Acaryochloris marina (strain MBIC 11017)).